Reading from the N-terminus, the 148-residue chain is Glycine cleavage system H protein 5 (148 aa).

Positions 33–115 (VFTIGLTSVA…YGQGWIAKVK (83 aa)) constitute a Lipoyl-binding domain. K74 bears the N6-lipoyllysine mark.

Belongs to the GcvH family. As to quaternary structure, the glycine cleavage system is composed of four proteins: P, T, L and H. The cofactor is (R)-lipoate.

Its function is as follows. The glycine cleavage system catalyzes the degradation of glycine. The H protein shuttles the methylamine group of glycine from the P protein to the T protein. The polypeptide is Glycine cleavage system H protein 5 (Aquifex aeolicus (strain VF5)).